Here is a 138-residue protein sequence, read N- to C-terminus: Host cell factor C1 regulator 1 (138 aa).

Residues 76-79 (DHPY) form an interaction with HCFC1 region. The Nuclear export signal motif lies at 110 to 119 (IPEALRLLRL).

Interacts with HCFC1. As to expression, widely expressed.

Its subcellular location is the cytoplasm. It localises to the nucleus. In terms of biological role, regulates HCFC1 activity by modulating its subcellular localization. Overexpression of HCFC1R1 leads to accumulation of HCFC1 in the cytoplasm. HCFC1R1-mediated export may provide the pool of cytoplasmic HCFC1 required for import of virion-derived VP16 into the nucleus. This is Host cell factor C1 regulator 1 (HCFC1R1) from Homo sapiens (Human).